We begin with the raw amino-acid sequence, 549 residues long: MASYAPFIKPYVQYNEHGWGPCEIPDMDVPYQPFCKSDRLGKICDWTVAMQEKKFSNKYASSFGNNSQYAYFHEDDDSTFHLVDTSGSRALKPYQRGRFRPNVRNNARVKGRSGRGPGMLGVAGSMAGGGTTSGSTKYGKGRESRRNQGRRFARNAPSRLRESSVLVRPNWVSLEEIEFPRLLKLALPNIKEGQDIVTCGSLEYYDKLYDRINLRNERPLLKMDRIVHTVTTTDDPVIRRLSKTMGNVFATDEILATIMCCTRSNYSWDVVIEKLGTKVFLDKRDNAQFDLLTVNETSLEPPMDEEGSINSAHSLAMEATLINHNFGQQVLRVGEQEPRFKFGEPNPFEEPGVELACLGYRYRQWQLGNDLVLVARCKHNGVIQGPNGEVQFLSIKALNEWDSKAANSVEWRQKLDTQRGAVLASELRNNACKLARWTVEAVLAGSDQLKLGYVSRVTPRDHLRHVILGTQQFKPQEFATQINLNMDNAWGILRCLVDIVMKQPDGKYLIVKDPNKPMVRLYDIPENSFDSDAEDEENSSEPFANSLDN.

The interval 107 to 157 (ARVKGRSGRGPGMLGVAGSMAGGGTTSGSTKYGKGRESRRNQGRRFARNAP) is disordered. Over residues 114–132 (GRGPGMLGVAGSMAGGGTT) the composition is skewed to gly residues. The segment at 288–302 (QFDLLTVNETSLEPP) is RNA gate. A disordered region spans residues 527–549 (NSFDSDAEDEENSSEPFANSLDN). Residues 529–539 (FDSDAEDEENS) show a composition bias toward acidic residues.

This sequence belongs to the eIF-3 subunit D family. As to quaternary structure, component of the eukaryotic translation initiation factor 3 (eIF-3) complex. The eIF-3 complex interacts with pix.

It localises to the cytoplasm. Its function is as follows. mRNA cap-binding component of the eukaryotic translation initiation factor 3 (eIF-3) complex, which is involved in protein synthesis of a specialized repertoire of mRNAs and, together with other initiation factors, stimulates binding of mRNA and methionyl-tRNAi to the 40S ribosome. The eIF-3 complex specifically targets and initiates translation of a subset of mRNAs involved in cell proliferation. In the eIF-3 complex, eif3d specifically recognizes and binds the 7-methylguanosine cap of a subset of mRNAs. In Drosophila ananassae (Fruit fly), this protein is Eukaryotic translation initiation factor 3 subunit D-2.